The primary structure comprises 594 residues: DNA mismatch repair protein MutL (594 aa).

This sequence belongs to the DNA mismatch repair MutL/HexB family.

This protein is involved in the repair of mismatches in DNA. It is required for dam-dependent methyl-directed DNA mismatch repair. May act as a 'molecular matchmaker', a protein that promotes the formation of a stable complex between two or more DNA-binding proteins in an ATP-dependent manner without itself being part of a final effector complex. The polypeptide is DNA mismatch repair protein MutL (Tolumonas auensis (strain DSM 9187 / NBRC 110442 / TA 4)).